We begin with the raw amino-acid sequence, 64 residues long: Large ribosomal subunit protein bL28 (64 aa).

It belongs to the bacterial ribosomal protein bL28 family.

In Persephonella marina (strain DSM 14350 / EX-H1), this protein is Large ribosomal subunit protein bL28.